The chain runs to 1371 residues: MTGKKLLLIGSGGREHALAWKLQQSKNVTEIFAFPGSIGISQLEKVQLVNNNEMNLKDFKGIASWCKINHIDLVIVGPEDPLAEGIADQLKAANIHCFGPSKAGARIESDKSWSKDFMIRHHIPTAQYGSFIDALKAKDFIRNTPNALVVKASGLAAGKGVIVAENIEEACAAVDEILGDHKFGTAGDVVVVEEKLSGQEVSVLGFVDSNSVRILPPAQDHKRLKDNDEGLNTGGMGAYCPCPLISQQELDIVKSQVLQRAVDGLRKENILYNGILYAGIMLTHDGPKTLEFNCRFGDPETQIILPLLDEDLYDLMMASCTNHLCNVPELKFKSNINAVGVVMASKGYPETSTKGCVISGIESVETMDNHIVFHSGTSKNNKDEWITNGGRVLINIALADNLKKAADLATKACDVVKFDGSQYRRDIGKKAFQIHSLTYKESGVNIEAGNSLVGRIKSLSYGTHRSGVVGQIGSFGGLMRLNDIKYINSNGEESNYKDIVLVQGTDGVGTKLKIAESMNVWDTIGIDLVAMCVNDVLCNGAEPIGFLDYIACGHLEVPTVATIVKGIADGCRKANCALIGGETAEMPSMYGKGKYDLAGYCVGITEYDEILPKINDVHVGDVVIGLPSSGIHSNGFSLVNKIFQQTGFKLTDIAEFSDSHKSYGMEFLTPTRLYVSETLPFLRNGYVKALAHITGGGLLENIPRILPNHLSVQIDALTWKLPKVFSWLAAHGNVNANEMLRTFNCGIGMIIIMPRNDIEWETIPEARMIGSITQRDHNGPQVIVKNFKEVLHKEVTHWKKGDAETTSISYKDSGVDITAGNELVDNIKPHAKSTNRKGVIGGLGSFGGLFRINECGTKFEDPMLVLATDGVGTKLKIAQQLGKHDTVGIDLVAMCNNDILCNGAEPLTFLDYFACGKLDVNVATNVVSGIAEGCRQSDSTLLGGETAEMPGMYNPNVYDLAGFSLGVAEHEDILPKKNCLEVGDIIIGFPSNGVHSNGFSLIHKLFELTGYKWTDIAPFSAYGKTFGEEFLEPTKVYVKEISPALKTGYVKALAHITGGGLWDNIPRVLPYNLTAELDAKKINISPVFAWLSLNGNIDKLELLKTFNCGIGMIMIASKEHELEILKSLYGSRASVIGKIIPTKPHGHQVIVRHFATCFERVERLLSIPKKRVGVLISGSGSNLQALIDATKSTNMGMCSEIVFVLSNKAGIFGLERAAKANIPSTVISNKDYATREAFDVALHNELIKHNVEIICLAGFMRILTPCFVNKWKGKLLNIHPSLLPKYKGITAQKDALESGDNESGCTVHFVDENVDTGAIIVQEIVPIFENDTVESLTERIHVAEHIAFPKALRLVASGYVRLNDKCETEWA.

An ATP-grasp domain is found at 115-321; it reads KDFMIRHHIP…LYDLMMASCT (207 aa). Residues 193–196, glutamate 200, arginine 223, and asparagine 232 each bind ATP; that span reads EEKL. Mg(2+) is bound by residues glutamate 291 and asparagine 293. The interval 434 to 1171 is AIRS domain; it reads IHSLTYKESG…ERLLSIPKKR (738 aa). Positions 1169 to 1369 are GART domain; the sequence is KKRVGVLISG…VRLNDKCETE (201 aa). 1180 to 1182 lines the N(1)-(5-phospho-beta-D-ribosyl)glycinamide pocket; the sequence is GSN. (6R)-10-formyltetrahydrofolate-binding positions include arginine 1235, 1260–1263, and asparagine 1277; that span reads MRIL. The Proton donor role is filled by histidine 1279. 1311–1315 contributes to the (6R)-10-formyltetrahydrofolate binding site; sequence DENVD. Residue 1341 to 1344 coordinates N(1)-(5-phospho-beta-D-ribosyl)glycinamide; sequence HVAE.

It in the N-terminal section; belongs to the GARS family. The protein in the central section; belongs to the AIR synthase family. In the C-terminal section; belongs to the GART family. Homodimer. The cofactor is Mg(2+). It depends on Mn(2+) as a cofactor.

The catalysed reaction is 5-phospho-beta-D-ribosylamine + glycine + ATP = N(1)-(5-phospho-beta-D-ribosyl)glycinamide + ADP + phosphate + H(+). It catalyses the reaction 2-formamido-N(1)-(5-O-phospho-beta-D-ribosyl)acetamidine + ATP = 5-amino-1-(5-phospho-beta-D-ribosyl)imidazole + ADP + phosphate + H(+). It carries out the reaction N(1)-(5-phospho-beta-D-ribosyl)glycinamide + (6R)-10-formyltetrahydrofolate = N(2)-formyl-N(1)-(5-phospho-beta-D-ribosyl)glycinamide + (6S)-5,6,7,8-tetrahydrofolate + H(+). It functions in the pathway purine metabolism; IMP biosynthesis via de novo pathway; 5-amino-1-(5-phospho-D-ribosyl)imidazole from N(2)-formyl-N(1)-(5-phospho-D-ribosyl)glycinamide: step 2/2. Its pathway is purine metabolism; IMP biosynthesis via de novo pathway; N(1)-(5-phospho-D-ribosyl)glycinamide from 5-phospho-alpha-D-ribose 1-diphosphate: step 2/2. It participates in purine metabolism; IMP biosynthesis via de novo pathway; N(2)-formyl-N(1)-(5-phospho-D-ribosyl)glycinamide from N(1)-(5-phospho-D-ribosyl)glycinamide (10-formyl THF route): step 1/1. Its function is as follows. Trifunctional enzyme that catalyzes three distinct reactions as part of the 'de novo' inosine monophosphate biosynthetic pathway. This Chironomus tentans (Midge) protein is Trifunctional purine biosynthetic protein adenosine-3 (GART).